The sequence spans 275 residues: Large ribosomal subunit protein uL2 (275 aa).

The segment at 221–275 (RGMTMNPVDHPMGGGEGRSKGHIPQSPWGIPAKGYKTRKSKKPSDKLIVKRRKQK) is disordered.

Belongs to the universal ribosomal protein uL2 family. Part of the 50S ribosomal subunit. Forms a bridge to the 30S subunit in the 70S ribosome.

Functionally, one of the primary rRNA binding proteins. Required for association of the 30S and 50S subunits to form the 70S ribosome, for tRNA binding and peptide bond formation. It has been suggested to have peptidyltransferase activity; this is somewhat controversial. Makes several contacts with the 16S rRNA in the 70S ribosome. In Kosmotoga olearia (strain ATCC BAA-1733 / DSM 21960 / TBF 19.5.1), this protein is Large ribosomal subunit protein uL2.